Reading from the N-terminus, the 231-residue chain is MMTTLTARPEAITFDPQQTALIVVDMQNAYATPGGYLDLAGFDVSTTRPVIANIQTAVTAARAAGMLIIWFQNGWDAQYVEAGGPGSPNFHKSNALKTMRKQPQLQGKLLAKGSWDYQLVDELVPQPGDIVLPKPRYSGFFNTPLDSILRSRGIRHLVFTGIATNVCVESTLRDGFFLEYFGVVLEDATHQAGPEFAQKAALFNIETFFGWVSDVETFCDALSPTSFARIA.

Catalysis depends on Asp-25, which acts as the Proton acceptor. Residue Lys-134 is part of the active site. The active-site Nucleophile is the Cys-167.

This sequence belongs to the isochorismatase family. RutB subfamily.

It carries out the reaction (Z)-3-ureidoacrylate + H2O + H(+) = (Z)-3-aminoacrylate + NH4(+) + CO2. The catalysed reaction is (Z)-3-ureidoacrylate + H2O = (Z)-3-aminoacrylate + carbamate + H(+). It catalyses the reaction (Z)-2-methylureidoacrylate + H2O + H(+) = (Z)-2-methylaminoacrylate + NH4(+) + CO2. Functionally, hydrolyzes ureidoacrylate to form aminoacrylate and carbamate. The carbamate hydrolyzes spontaneously, thereby releasing one of the nitrogen atoms of the pyrimidine ring as ammonia and one of its carbon atoms as CO2. This Escherichia coli (strain SMS-3-5 / SECEC) protein is Ureidoacrylate amidohydrolase RutB.